A 92-amino-acid chain; its full sequence is uncharacterized protein (92 aa).

3 consecutive transmembrane segments (helical) span residues 1–21 (MNIY…LVGL), 30–50 (ANVL…IVVI), and 62–82 (IALA…KVIG).

It to M.thermoautotrophicum MTH1250.

Its subcellular location is the cell membrane. This is an uncharacterized protein from Methanocaldococcus jannaschii (strain ATCC 43067 / DSM 2661 / JAL-1 / JCM 10045 / NBRC 100440) (Methanococcus jannaschii).